The following is a 759-amino-acid chain: uncharacterized protein (759 aa).

Disordered regions lie at residues 1 to 31 and 188 to 211; these read MDGN…TSFQ and NDEG…PFAN. The span at 17–31 shows a compositional bias: low complexity; the sequence is LSPLQTSFPSSTSFQ. Acidic residues predominate over residues 189–207; the sequence is DEGEDVKDNEQDDNIDESD. A run of 10 helical transmembrane segments spans residues 434–454, 456–476, 486–505, 517–537, 555–575, 597–617, 620–640, 643–663, 670–690, and 726–746; these read YFRT…ILPM, FQGG…VGIL, MYNS…LSRA, FCFS…YIVL, MFYA…GAAL, DKWK…VNQA, SQWP…YFTA, FGSN…LGNI, GVAF…GLAA, and LVMV…ALVV.

The protein belongs to the ThrE exporter (TC 2.A.79) family.

It is found in the endoplasmic reticulum membrane. This is an uncharacterized protein from Schizosaccharomyces pombe (strain 972 / ATCC 24843) (Fission yeast).